The following is a 383-amino-acid chain: Lipid-A-disaccharide synthase (383 aa).

It belongs to the LpxB family.

It carries out the reaction a lipid X + a UDP-2-N,3-O-bis[(3R)-3-hydroxyacyl]-alpha-D-glucosamine = a lipid A disaccharide + UDP + H(+). It participates in bacterial outer membrane biogenesis; LPS lipid A biosynthesis. In terms of biological role, condensation of UDP-2,3-diacylglucosamine and 2,3-diacylglucosamine-1-phosphate to form lipid A disaccharide, a precursor of lipid A, a phosphorylated glycolipid that anchors the lipopolysaccharide to the outer membrane of the cell. The protein is Lipid-A-disaccharide synthase of Anaeromyxobacter dehalogenans (strain 2CP-C).